Here is a 380-residue protein sequence, read N- to C-terminus: MTFASDSVGLVEARRADFDTPLALASGTVLDRYSLCYETYGELNPEANNAILICHALSGHHHVAGRYCEDDKQAGWWDNMVGPGKPIDTARFFVVGVNNLGGCHGSTGPSSVNPATGRPWGSAFPLVTVPDWVESQARLADLLGIRRWAAVIGGSLGGMQALEWSMRFPERVANALVIASAPKLSAQNIAFNDVARQAILTDPEFHGGDFYAHGVVPRRGLRLARMLGHITYLSDDGMGAKFGRLLRSGDYQYGFDVEFEIESYLRYQGDKFSGLFDANTYLLMTKALDYFDPAKAFDGDLVAALARVRANFLIAAFTSDWRFAPDRSREIVKALVAAGKRVSYGEIESTHGHDAFLMTDSPYVALMRAYLNRVAEELAA.

The 309-residue stretch at 49–357 folds into the AB hydrolase-1 domain; that stretch reads NAILICHALS…ESTHGHDAFL (309 aa). The active-site Nucleophile is S155. R225 is a substrate binding site. Residues D320 and H353 contribute to the active site. D354 serves as a coordination point for substrate.

This sequence belongs to the AB hydrolase superfamily. MetX family. In terms of assembly, homodimer.

It localises to the cytoplasm. It catalyses the reaction L-homoserine + succinyl-CoA = O-succinyl-L-homoserine + CoA. It participates in amino-acid biosynthesis; L-methionine biosynthesis via de novo pathway; O-succinyl-L-homoserine from L-homoserine: step 1/1. Functionally, transfers a succinyl group from succinyl-CoA to L-homoserine, forming succinyl-L-homoserine. This Laribacter hongkongensis (strain HLHK9) protein is Homoserine O-succinyltransferase.